A 398-amino-acid chain; its full sequence is Succinate--CoA ligase [ADP-forming] subunit beta (398 aa).

In terms of domain architecture, ATP-grasp spans 9–254 (KALLKSYGAP…TTEEDDKEIE (246 aa)). Residues lysine 46, 53–55 (GRG), glutamate 109, alanine 112, and glutamate 117 each bind ATP. Residues asparagine 209 and aspartate 223 each contribute to the Mg(2+) site. Substrate-binding positions include asparagine 274 and 331-333 (GIM).

This sequence belongs to the succinate/malate CoA ligase beta subunit family. Heterotetramer of two alpha and two beta subunits. It depends on Mg(2+) as a cofactor.

The catalysed reaction is succinate + ATP + CoA = succinyl-CoA + ADP + phosphate. It catalyses the reaction GTP + succinate + CoA = succinyl-CoA + GDP + phosphate. It participates in carbohydrate metabolism; tricarboxylic acid cycle; succinate from succinyl-CoA (ligase route): step 1/1. In terms of biological role, succinyl-CoA synthetase functions in the citric acid cycle (TCA), coupling the hydrolysis of succinyl-CoA to the synthesis of either ATP or GTP and thus represents the only step of substrate-level phosphorylation in the TCA. The beta subunit provides nucleotide specificity of the enzyme and binds the substrate succinate, while the binding sites for coenzyme A and phosphate are found in the alpha subunit. The polypeptide is Succinate--CoA ligase [ADP-forming] subunit beta (Rhizobium meliloti (strain 1021) (Ensifer meliloti)).